Here is a 207-residue protein sequence, read N- to C-terminus: MTKKVMDEQESHKEYLDEILQAGEVQEDTVPLVEWSQGQSSPEGECTEARIAELETELARQKEQAGKYRDELLRRAADFENFRKQKEREAMMASSRALENIIRELLPVIDDVKRLLDHAPLSAERSSEARPYIEGVEMVKKNLEKWLDEKGVKAIASIGTMLDVNFHEAISQIDSPDAEPDMIVDEYQTGYLLGERVIRHAKVIVAR.

It belongs to the GrpE family. As to quaternary structure, homodimer.

The protein resides in the cytoplasm. Participates actively in the response to hyperosmotic and heat shock by preventing the aggregation of stress-denatured proteins, in association with DnaK and GrpE. It is the nucleotide exchange factor for DnaK and may function as a thermosensor. Unfolded proteins bind initially to DnaJ; upon interaction with the DnaJ-bound protein, DnaK hydrolyzes its bound ATP, resulting in the formation of a stable complex. GrpE releases ADP from DnaK; ATP binding to DnaK triggers the release of the substrate protein, thus completing the reaction cycle. Several rounds of ATP-dependent interactions between DnaJ, DnaK and GrpE are required for fully efficient folding. This chain is Protein GrpE, found in Pelodictyon phaeoclathratiforme (strain DSM 5477 / BU-1).